Here is a 347-residue protein sequence, read N- to C-terminus: DNA-directed RNA polymerase subunit alpha (347 aa).

The segment at 1-243 is alpha N-terminal domain (alpha-NTD); the sequence is MLIKQGDRLI…DQISVFINFD (243 aa). Positions 260–347 are alpha C-terminal domain (alpha-CTD); it reads VNENLFKGID…EWKRKQQNEA (88 aa).

It belongs to the RNA polymerase alpha chain family. As to quaternary structure, homodimer. The RNAP catalytic core consists of 2 alpha, 1 beta, 1 beta' and 1 omega subunit. When a sigma factor is associated with the core the holoenzyme is formed, which can initiate transcription.

The enzyme catalyses RNA(n) + a ribonucleoside 5'-triphosphate = RNA(n+1) + diphosphate. Its function is as follows. DNA-dependent RNA polymerase catalyzes the transcription of DNA into RNA using the four ribonucleoside triphosphates as substrates. This is DNA-directed RNA polymerase subunit alpha from Nitratidesulfovibrio vulgaris (strain DSM 19637 / Miyazaki F) (Desulfovibrio vulgaris).